A 230-amino-acid chain; its full sequence is 6-carboxyhexanoate--CoA ligase (230 aa).

It belongs to the BioW family. As to quaternary structure, homodimer. The cofactor is Mg(2+).

It catalyses the reaction heptanedioate + ATP + CoA = 6-carboxyhexanoyl-CoA + AMP + diphosphate. It functions in the pathway metabolic intermediate metabolism; pimeloyl-CoA biosynthesis; pimeloyl-CoA from pimelate: step 1/1. Functionally, catalyzes the transformation of pimelate into pimeloyl-CoA with concomitant hydrolysis of ATP to AMP. The chain is 6-carboxyhexanoate--CoA ligase from Staphylococcus aureus (strain MRSA252).